Reading from the N-terminus, the 439-residue chain is COBRA-like protein 7 (439 aa).

An N-terminal signal peptide occupies residues 1 to 22; the sequence is MDVDQLILFVFVCCLSSRFADA. Asparagine 138, asparagine 181, asparagine 186, asparagine 232, asparagine 312, and asparagine 346 each carry an N-linked (GlcNAc...) asparagine glycan. Asparagine 412 carries GPI-anchor amidated asparagine lipidation. A propeptide spans 413–439 (removed in mature form); the sequence is GGPDSRVSAAQLIASSCLLLPFIFLIM.

It belongs to the COBRA family.

The protein resides in the cell membrane. Its function is as follows. Involved in determining the orientation of cell expansion, probably by playing an important role in cellulose deposition. May act by recruiting cellulose synthesizing complexes to discrete positions on the cell surface. The polypeptide is COBRA-like protein 7 (BC1LP1) (Oryza sativa subsp. japonica (Rice)).